A 432-amino-acid chain; its full sequence is 3-phosphoshikimate 1-carboxyvinyltransferase (432 aa).

3-phosphoshikimate is bound by residues lysine 23, serine 24, and arginine 28. Lysine 23 is a phosphoenolpyruvate binding site. Phosphoenolpyruvate-binding residues include glycine 95 and arginine 123. 3-phosphoshikimate-binding residues include serine 167, glutamine 169, aspartate 317, and lysine 344. Glutamine 169 contacts phosphoenolpyruvate. Aspartate 317 functions as the Proton acceptor in the catalytic mechanism. Phosphoenolpyruvate-binding residues include arginine 348 and arginine 390.

This sequence belongs to the EPSP synthase family. In terms of assembly, monomer.

The protein localises to the cytoplasm. It catalyses the reaction 3-phosphoshikimate + phosphoenolpyruvate = 5-O-(1-carboxyvinyl)-3-phosphoshikimate + phosphate. Its pathway is metabolic intermediate biosynthesis; chorismate biosynthesis; chorismate from D-erythrose 4-phosphate and phosphoenolpyruvate: step 6/7. Its function is as follows. Catalyzes the transfer of the enolpyruvyl moiety of phosphoenolpyruvate (PEP) to the 5-hydroxyl of shikimate-3-phosphate (S3P) to produce enolpyruvyl shikimate-3-phosphate and inorganic phosphate. In Staphylococcus aureus (strain JH9), this protein is 3-phosphoshikimate 1-carboxyvinyltransferase.